We begin with the raw amino-acid sequence, 394 residues long: Venom metalloproteinase antarease-like TtrivMP_A (394 aa).

Positions 1 to 16 are cleaved as a signal peptide; that stretch reads MISYLASIFLLATVSA. Positions 17–158 are excised as a propeptide; it reads VPSGRVEVVF…AENVSRMAEE (142 aa). Residue N151 is glycosylated (N-linked (GlcNAc...) asparagine). The Peptidase M12B domain maps to 162 to 390; the sequence is IVVEYYIVTD…KPTAFCIFEQ (229 aa). C295 and C386 form a disulfide bridge. Zn(2+) is bound at residue H319. Residue E320 is part of the active site. Residues H323 and H329 each contribute to the Zn(2+) site.

The protein belongs to the venom metalloproteinase (M12B) family. The cofactor is Zn(2+). In terms of tissue distribution, expressed by the venom gland.

It is found in the secreted. Inhibited by EDTA. Functionally, acts as a metalloprotease. Penetrates intact tissue and specifically cleaves the vesicle-associated membrane protein 2 (VAMP2) (part of the SNARE complex) involved in pancreatic secretion, thus disrupting the normal vesicular traffic. The protein is Venom metalloproteinase antarease-like TtrivMP_A of Tityus trivittatus (Argentinean scorpion).